The following is a 632-amino-acid chain: Bestrophin homolog 24 (632 aa).

A run of 4 helical transmembrane segments spans residues 28–48, 83–103, 234–254, and 271–291; these read IWKAVILELAVWLVLYGILSV, GFFVTAVVNRWTYLYQIIGFI, IMYPQLVCLAVHTYFLVCLLA, and LYFPIMSTLQFIFYMGWMKVA. Disordered regions lie at residues 491–516 and 562–632; these read LSNKRIDTSSSQPQLATGKRGSEHPF and ETEV…TKFE. A compositionally biased stretch (basic and acidic residues) spans 563-602; that stretch reads TEVKRDEKKKKEEELREEGDNGKEEKDNKEDKKEEQDRPS. A compositionally biased stretch (basic residues) spans 623–632; the sequence is PHLRPPTKFE.

It belongs to the anion channel-forming bestrophin (TC 1.A.46) family. Calcium-sensitive chloride channel subfamily. In terms of assembly, forms oligomers.

The protein localises to the cell membrane. Functionally, forms chloride channels. The sequence is that of Bestrophin homolog 24 (best-24) from Caenorhabditis elegans.